Consider the following 526-residue polypeptide: Peptide chain release factor 3 (526 aa).

The region spanning 8–277 (NKRRTFAIIS…GLTEWAPKPQ (270 aa)) is the tr-type G domain. GTP contacts are provided by residues 17-24 (SHPDAGKT), 85-89 (DTPGH), and 139-142 (NKLD).

Belongs to the TRAFAC class translation factor GTPase superfamily. Classic translation factor GTPase family. PrfC subfamily.

Its subcellular location is the cytoplasm. Its function is as follows. Increases the formation of ribosomal termination complexes and stimulates activities of RF-1 and RF-2. It binds guanine nucleotides and has strong preference for UGA stop codons. It may interact directly with the ribosome. The stimulation of RF-1 and RF-2 is significantly reduced by GTP and GDP, but not by GMP. This is Peptide chain release factor 3 from Actinobacillus pleuropneumoniae serotype 5b (strain L20).